The following is a 354-amino-acid chain: Protein RecA (354 aa).

Position 75–82 (75–82) interacts with ATP; the sequence is GPESSGKT.

This sequence belongs to the RecA family.

It is found in the cytoplasm. Can catalyze the hydrolysis of ATP in the presence of single-stranded DNA, the ATP-dependent uptake of single-stranded DNA by duplex DNA, and the ATP-dependent hybridization of homologous single-stranded DNAs. It interacts with LexA causing its activation and leading to its autocatalytic cleavage. The polypeptide is Protein RecA (Cupriavidus taiwanensis (strain DSM 17343 / BCRC 17206 / CCUG 44338 / CIP 107171 / LMG 19424 / R1) (Ralstonia taiwanensis (strain LMG 19424))).